The sequence spans 168 residues: Photosystem I assembly protein Ycf3 (168 aa).

TPR repeat units follow at residues 35–68, 72–105, and 120–153; these read AFTY…EIDP, SYIL…NPFL, and GEQA…TPGN.

Belongs to the Ycf3 family.

It localises to the plastid. The protein localises to the chloroplast thylakoid membrane. In terms of biological role, essential for the assembly of the photosystem I (PSI) complex. May act as a chaperone-like factor to guide the assembly of the PSI subunits. In Nandina domestica (Heavenly bamboo), this protein is Photosystem I assembly protein Ycf3.